The chain runs to 576 residues: Phosphoenolpyruvate-protein phosphotransferase (576 aa).

His-189 (tele-phosphohistidine intermediate) is an active-site residue. The phosphoenolpyruvate site is built by Arg-296 and Arg-332. Residues Glu-431 and Asp-455 each coordinate Mg(2+). Phosphoenolpyruvate-binding positions include Asn-454–Asp-455 and Arg-465. The active-site Proton donor is the Cys-502.

Belongs to the PEP-utilizing enzyme family. Homodimer. Mg(2+) serves as cofactor.

The protein resides in the cytoplasm. It carries out the reaction L-histidyl-[protein] + phosphoenolpyruvate = N(pros)-phospho-L-histidyl-[protein] + pyruvate. General (non sugar-specific) component of the phosphoenolpyruvate-dependent sugar phosphotransferase system (sugar PTS). This major carbohydrate active-transport system catalyzes the phosphorylation of incoming sugar substrates concomitantly with their translocation across the cell membrane. Enzyme I transfers the phosphoryl group from phosphoenolpyruvate (PEP) to the phosphoryl carrier protein (HPr). The sequence is that of Phosphoenolpyruvate-protein phosphotransferase (ptsI) from Buchnera aphidicola subsp. Baizongia pistaciae (strain Bp).